The chain runs to 175 residues: Epididymal-specific lipocalin-8 (175 aa).

A signal peptide spans 1–25 (MPGAAEALPTVTVTLVAGAVPPASG). Residues asparagine 66 and asparagine 74 are each glycosylated (N-linked (GlcNAc...) asparagine). A disulfide bridge links cysteine 79 with cysteine 166.

Belongs to the calycin superfamily. Lipocalin family.

Its subcellular location is the secreted. Its function is as follows. May play a role in male fertility. May act as a retinoid carrier protein within the epididymis. This is Epididymal-specific lipocalin-8 (LCN8) from Homo sapiens (Human).